A 538-amino-acid polypeptide reads, in one-letter code: uncharacterized protein (538 aa).

Disordered regions lie at residues 20–71, 151–211, 288–331, and 458–482; these read RLSA…GGAQ, LWAE…EHPK, MLQP…QQHK, and EFEK…LKNY. Residues 154–171 are compositionally biased toward basic and acidic residues; the sequence is ESEKSESKGTRRDFRSYD.

This is an uncharacterized protein from Homo sapiens (Human).